The chain runs to 319 residues: tRNA-cytidine(32) 2-sulfurtransferase (319 aa).

The PP-loop motif signature appears at 43 to 48 (SGGKDS). [4Fe-4S] cluster is bound by residues Cys-118, Cys-121, and Cys-209.

The protein belongs to the TtcA family. In terms of assembly, homodimer. Mg(2+) serves as cofactor. [4Fe-4S] cluster is required as a cofactor.

The protein localises to the cytoplasm. It catalyses the reaction cytidine(32) in tRNA + S-sulfanyl-L-cysteinyl-[cysteine desulfurase] + AH2 + ATP = 2-thiocytidine(32) in tRNA + L-cysteinyl-[cysteine desulfurase] + A + AMP + diphosphate + H(+). Its pathway is tRNA modification. Functionally, catalyzes the ATP-dependent 2-thiolation of cytidine in position 32 of tRNA, to form 2-thiocytidine (s(2)C32). The sulfur atoms are provided by the cysteine/cysteine desulfurase (IscS) system. The sequence is that of tRNA-cytidine(32) 2-sulfurtransferase from Neisseria meningitidis serogroup A / serotype 4A (strain DSM 15465 / Z2491).